Reading from the N-terminus, the 417-residue chain is MFSFEKNSLKNTDKEIFDAIELEVKRQHEHVELIASENYASPAVMEAQGSQLTNKYAEGYHGKRYYGGCEFVDIAEKLAIERAQQLFGVDYANVQPHSGSQANAAVYNAVLKPGDTVLGMDLGAGGHLTHGSKVNFSGKIYNSIQYGLDENGDIDYEQVAQLAKEHKPKMIIAGFSAFSGIINWQKFREIADSVDAVLMADIAHVAGLVAAGVYPNPFPYVDVATTTTHKTLRGPRGGLILCNNNPELAKKFQSAIFPGIQGGPLMHVIAAKAVAFKEALEPSFVDYQKQVLKNAKAMEKVLKQRGINIISGGTSNHLLLLDITNTGFSGKEAEAALGRANITVNKNSIPNDPRSPFVTSGLRIGSPAITTRGFKEKECELVANLLADVVFNCGDEKVENETAAKILDLCDKFPVYK.

(6S)-5,6,7,8-tetrahydrofolate-binding positions include Leu122 and 126-128 (GHL). Lys230 carries the N6-(pyridoxal phosphate)lysine modification. Position 355–357 (355–357 (SPF)) interacts with (6S)-5,6,7,8-tetrahydrofolate.

The protein belongs to the SHMT family. In terms of assembly, homodimer. It depends on pyridoxal 5'-phosphate as a cofactor.

It is found in the cytoplasm. The enzyme catalyses (6R)-5,10-methylene-5,6,7,8-tetrahydrofolate + glycine + H2O = (6S)-5,6,7,8-tetrahydrofolate + L-serine. It functions in the pathway one-carbon metabolism; tetrahydrofolate interconversion. Its pathway is amino-acid biosynthesis; glycine biosynthesis; glycine from L-serine: step 1/1. In terms of biological role, catalyzes the reversible interconversion of serine and glycine with tetrahydrofolate (THF) serving as the one-carbon carrier. This reaction serves as the major source of one-carbon groups required for the biosynthesis of purines, thymidylate, methionine, and other important biomolecules. Also exhibits THF-independent aldolase activity toward beta-hydroxyamino acids, producing glycine and aldehydes, via a retro-aldol mechanism. In Francisella tularensis subsp. novicida (strain U112), this protein is Serine hydroxymethyltransferase.